We begin with the raw amino-acid sequence, 143 residues long: Probable cyclic pyranopterin monophosphate synthase (143 aa).

Substrate is bound by residues 61–63 and 97–98; these read YCH and ME. Asp-112 is a catalytic residue.

The protein belongs to the MoaC family. Homohexamer; trimer of dimers.

It catalyses the reaction (8S)-3',8-cyclo-7,8-dihydroguanosine 5'-triphosphate = cyclic pyranopterin phosphate + diphosphate. Its pathway is cofactor biosynthesis; molybdopterin biosynthesis. In terms of biological role, catalyzes the conversion of (8S)-3',8-cyclo-7,8-dihydroguanosine 5'-triphosphate to cyclic pyranopterin monophosphate (cPMP). The polypeptide is Probable cyclic pyranopterin monophosphate synthase (Thermoplasma acidophilum (strain ATCC 25905 / DSM 1728 / JCM 9062 / NBRC 15155 / AMRC-C165)).